The chain runs to 1057 residues: Exportin-1 (1057 aa).

Residues 36–102 (AQMVLGKFQE…KNYIVSLIIR (67 aa)) enclose the Importin N-terminal domain. HEAT repeat units lie at residues 239–275 (AEPSKLVKLLLHKYFPEPLFRNSTLKCLTEIGNLNLG), 281–321 (AVFI…FIHT), 462–501 (NTQHIMLEKLQTLISGREFTFQRLNTLCWAIGSISGAQNK), 506–544 (RFLVTVIKDLLELCQNKKGKDNKAVIASDIMYIVGQYPR), 551–588 (KFLKTVVNKLFEFMHESHPGVQDMACDTFLKISKQCKR), 596–633 (EESQPFINELLNQLSTTIAHLEQSQIHTFYEAVGYMIA), 739–776 (KETLKLLETFIEKSSDKQVIYSNFLQPLLEAVLGDYRT), 781–818 (TRDPEVLSLMTAIITSLKQLVHPEVPKILEAVFETTLS), 855–892 (QQFKLLIDCVVWAFKHTERNISETGLHILKELIENVSK), 902–925 (KTYLVSLLNDILYILTDSFHKSGF), and 926–965 (ALECDILRMMFQVVENGVVKIPLFDPQQANFPSNSEYVKE).

Belongs to the exportin family. In terms of assembly, component of a nuclear export receptor complex.

It localises to the nucleus. Its subcellular location is the cytoplasm. The protein resides in the perinuclear region. In terms of biological role, mediates the nuclear export of cellular proteins (cargos) bearing a leucine-rich nuclear export signal (NES). This chain is Exportin-1 (xpo1), found in Dictyostelium discoideum (Social amoeba).